The sequence spans 720 residues: Biotin biosynthesis bifunctional protein BioWF (720 aa).

Positions 1 to 39 are disordered; that stretch reads MRFSIKMRASARVSSSPSTSDGSSGDHTESRDRADRHIS. A compositionally biased stretch (low complexity) spans 8 to 23; sequence RASARVSSSPSTSDGS. A compositionally biased stretch (basic and acidic residues) spans 24 to 39; sequence SGDHTESRDRADRHIS. Residue Arg314 coordinates substrate. 401–402 contacts pyridoxal 5'-phosphate; the sequence is GY. His439 contributes to the substrate binding site. Pyridoxal 5'-phosphate-binding positions include Ser488, 513 to 516, and 564 to 567; these read DDAH and TASK. N6-(pyridoxal phosphate)lysine is present on Lys567. Residue Thr684 participates in substrate binding.

This sequence in the N-terminal section; belongs to the BioW family. In the C-terminal section; belongs to the class-II pyridoxal-phosphate-dependent aminotransferase family. BioF subfamily. As to quaternary structure, homodimer. Mg(2+) serves as cofactor. Requires pyridoxal 5'-phosphate as cofactor.

The catalysed reaction is heptanedioate + ATP + CoA = 6-carboxyhexanoyl-CoA + AMP + diphosphate. It carries out the reaction 6-carboxyhexanoyl-[ACP] + L-alanine + H(+) = (8S)-8-amino-7-oxononanoate + holo-[ACP] + CO2. The protein operates within metabolic intermediate metabolism; pimeloyl-CoA biosynthesis; pimeloyl-CoA from pimelate: step 1/1. It functions in the pathway cofactor biosynthesis; biotin biosynthesis. Functionally, catalyzes both the decarboxylative condensation of pimeloyl-[acyl-carrier protein] and L-alanine to produce 8-amino-7-oxononanoate (AON), [acyl-carrier protein], and carbon dioxide, and the transformation of pimelate into pimeloyl-CoA with concomitant hydrolysis of ATP to AMP. In Corynebacterium kroppenstedtii (strain DSM 44385 / JCM 11950 / CIP 105744 / CCUG 35717), this protein is Biotin biosynthesis bifunctional protein BioWF (bioWF).